Reading from the N-terminus, the 331-residue chain is Ketol-acid reductoisomerase (NADP(+)) (331 aa).

The region spanning 2–182 (ARMYYDADAN…GGTRGGILET (181 aa)) is the KARI N-terminal Rossmann domain. NADP(+) contacts are provided by residues 25–28 (YGSQ), S51, S53, and 83–86 (DDVQ). The active site involves H108. G134 serves as a coordination point for NADP(+). The KARI C-terminal knotted domain occupies 183–328 (TFREETETDL…KDLRAMFSWL (146 aa)). Residues D191, E195, E227, and E231 each contribute to the Mg(2+) site. S252 is a substrate binding site.

It belongs to the ketol-acid reductoisomerase family. Mg(2+) is required as a cofactor.

It catalyses the reaction (2R)-2,3-dihydroxy-3-methylbutanoate + NADP(+) = (2S)-2-acetolactate + NADPH + H(+). The catalysed reaction is (2R,3R)-2,3-dihydroxy-3-methylpentanoate + NADP(+) = (S)-2-ethyl-2-hydroxy-3-oxobutanoate + NADPH + H(+). It participates in amino-acid biosynthesis; L-isoleucine biosynthesis; L-isoleucine from 2-oxobutanoate: step 2/4. The protein operates within amino-acid biosynthesis; L-valine biosynthesis; L-valine from pyruvate: step 2/4. Its function is as follows. Involved in the biosynthesis of branched-chain amino acids (BCAA). Catalyzes an alkyl-migration followed by a ketol-acid reduction of (S)-2-acetolactate (S2AL) to yield (R)-2,3-dihydroxy-isovalerate. In the isomerase reaction, S2AL is rearranged via a Mg-dependent methyl migration to produce 3-hydroxy-3-methyl-2-ketobutyrate (HMKB). In the reductase reaction, this 2-ketoacid undergoes a metal-dependent reduction by NADPH to yield (R)-2,3-dihydroxy-isovalerate. The protein is Ketol-acid reductoisomerase (NADP(+)) of Picosynechococcus sp. (strain ATCC 27264 / PCC 7002 / PR-6) (Agmenellum quadruplicatum).